Reading from the N-terminus, the 79-residue chain is Conotoxin ArMSGL-021 (79 aa).

The N-terminal stretch at 1–20 is a signal peptide; that stretch reads MSRLGIMVLTLLLLVFIVTS. A propeptide spanning residues 21–44 is cleaved from the precursor; sequence HQDAGEKQATHRGAINFRWRRSLI. 3 cysteine pairs are disulfide-bonded: Cys52–Cys64, Cys56–Cys73, and Cys63–Cys77. Leu78 carries the post-translational modification Leucine amide.

Belongs to the conotoxin O3 superfamily. Expressed by the venom duct.

It localises to the secreted. The chain is Conotoxin ArMSGL-021 from Conus arenatus (Sand-dusted cone).